Reading from the N-terminus, the 334-residue chain is Fe-S cluster assembly protein DRE2 (334 aa).

An N-terminal SAM-like domain region spans residues 1-131; the sequence is MASTKTGLVL…ASIKAEPVAV (131 aa). The interval 132–228 is linker; sequence PLRNHKKTTT…EDELVDENEM (97 aa). The disordered stretch occupies residues 135 to 229; the sequence is NHKKTTTPGT…DELVDENEMR (95 aa). A compositionally biased stretch (low complexity) spans 140 to 150; the sequence is TTPGTTTTAKK. Acidic residues-rich tracts occupy residues 182–192 and 215–227; these read DSEDEDEESEG and DSIE…DENE. [2Fe-2S] cluster is bound by residues Cys-238, Cys-249, Cys-252, and Cys-254. The segment at 238–254 is fe-S binding site A; that stretch reads CGKSKTRRRKACKDCTC. Cys-297, Cys-300, Cys-308, and Cys-311 together coordinate [4Fe-4S] cluster. 2 consecutive short sequence motifs (cx2C motif) follow at residues 297–300 and 308–311; these read CGSC and CSGC. The segment at 297-311 is fe-S binding site B; that stretch reads CGSCTLGDAFRCSGC.

This sequence belongs to the anamorsin family. Monomer. Interacts with TAH18. Interacts with MIA40. Requires [2Fe-2S] cluster as cofactor. [4Fe-4S] cluster serves as cofactor.

It is found in the cytoplasm. Its subcellular location is the mitochondrion intermembrane space. Component of the cytosolic iron-sulfur (Fe-S) protein assembly (CIA) machinery required for the maturation of extramitochondrial Fe-S proteins. Part of an electron transfer chain functioning in an early step of cytosolic Fe-S biogenesis, facilitating the de novo assembly of a [4Fe-4S] cluster on the scaffold complex CFD1-NBP35. Electrons are transferred to DRE2 from NADPH via the FAD- and FMN-containing protein TAH18. TAH18-DRE2 are also required for the assembly of the diferric tyrosyl radical cofactor of ribonucleotide reductase (RNR), probably by providing electrons for reduction during radical cofactor maturation in the catalytic small subunit RNR2. In Zygosaccharomyces rouxii (strain ATCC 2623 / CBS 732 / NBRC 1130 / NCYC 568 / NRRL Y-229), this protein is Fe-S cluster assembly protein DRE2.